Consider the following 123-residue polypeptide: Small ribosomal subunit protein uS12c (123 aa).

It belongs to the universal ribosomal protein uS12 family. Part of the 30S ribosomal subunit.

Its subcellular location is the plastid. The protein localises to the chloroplast. Functionally, with S4 and S5 plays an important role in translational accuracy. Located at the interface of the 30S and 50S subunits. The protein is Small ribosomal subunit protein uS12c (rps12) of Chaetosphaeridium globosum (Charophycean green alga).